Reading from the N-terminus, the 501-residue chain is uncharacterized protein (501 aa).

A helical transmembrane segment spans residues Ile-26–Met-46. 2 disordered regions span residues Arg-316 to Arg-384 and Glu-409 to Asn-501. Over residues Arg-476–Pro-490 the composition is skewed to low complexity.

The protein resides in the membrane. This is an uncharacterized protein from Homo sapiens (Human).